The primary structure comprises 867 residues: Valine--tRNA ligase (867 aa).

The 'HIGH' region motif lies at 42–52; it reads PNITGKIHMGH. The 'KMSKS' region signature appears at 521–525; it reads KMSKS. Lysine 524 contacts ATP. A coiled-coil region spans residues 794 to 867; it reads LGTLIDVKSE…QIISDLEAKA (74 aa).

It belongs to the class-I aminoacyl-tRNA synthetase family. ValS type 1 subfamily. In terms of assembly, monomer.

The protein resides in the cytoplasm. It catalyses the reaction tRNA(Val) + L-valine + ATP = L-valyl-tRNA(Val) + AMP + diphosphate. Its function is as follows. Catalyzes the attachment of valine to tRNA(Val). As ValRS can inadvertently accommodate and process structurally similar amino acids such as threonine, to avoid such errors, it has a 'posttransfer' editing activity that hydrolyzes mischarged Thr-tRNA(Val) in a tRNA-dependent manner. This is Valine--tRNA ligase from Fervidobacterium nodosum (strain ATCC 35602 / DSM 5306 / Rt17-B1).